A 188-amino-acid polypeptide reads, in one-letter code: Peptidyl-tRNA hydrolase (188 aa).

Y18 is a tRNA binding site. H23 (proton acceptor) is an active-site residue. TRNA contacts are provided by Y67, N69, and N115.

Belongs to the PTH family. In terms of assembly, monomer.

Its subcellular location is the cytoplasm. It catalyses the reaction an N-acyl-L-alpha-aminoacyl-tRNA + H2O = an N-acyl-L-amino acid + a tRNA + H(+). In terms of biological role, hydrolyzes ribosome-free peptidyl-tRNAs (with 1 or more amino acids incorporated), which drop off the ribosome during protein synthesis, or as a result of ribosome stalling. Catalyzes the release of premature peptidyl moieties from peptidyl-tRNA molecules trapped in stalled 50S ribosomal subunits, and thus maintains levels of free tRNAs and 50S ribosomes. The polypeptide is Peptidyl-tRNA hydrolase (Salinibacter ruber (strain DSM 13855 / M31)).